The sequence spans 188 residues: Elongation factor P (188 aa).

The protein belongs to the elongation factor P family.

Its subcellular location is the cytoplasm. It participates in protein biosynthesis; polypeptide chain elongation. Its function is as follows. Involved in peptide bond synthesis. Stimulates efficient translation and peptide-bond synthesis on native or reconstituted 70S ribosomes in vitro. Probably functions indirectly by altering the affinity of the ribosome for aminoacyl-tRNA, thus increasing their reactivity as acceptors for peptidyl transferase. This chain is Elongation factor P, found in Caulobacter sp. (strain K31).